The following is a 238-amino-acid chain: 2-C-methyl-D-erythritol 4-phosphate cytidylyltransferase (238 aa).

The protein belongs to the IspD/TarI cytidylyltransferase family. IspD subfamily.

The catalysed reaction is 2-C-methyl-D-erythritol 4-phosphate + CTP + H(+) = 4-CDP-2-C-methyl-D-erythritol + diphosphate. It functions in the pathway isoprenoid biosynthesis; isopentenyl diphosphate biosynthesis via DXP pathway; isopentenyl diphosphate from 1-deoxy-D-xylulose 5-phosphate: step 2/6. In terms of biological role, catalyzes the formation of 4-diphosphocytidyl-2-C-methyl-D-erythritol from CTP and 2-C-methyl-D-erythritol 4-phosphate (MEP). The chain is 2-C-methyl-D-erythritol 4-phosphate cytidylyltransferase from Acinetobacter baumannii (strain SDF).